The primary structure comprises 228 residues: Sodium channel regulatory subunit beta-4 (228 aa).

The first 30 residues, 1-30, serve as a signal peptide directing secretion; sequence MSRAGNRGNTQARWLGTGLLGLFLLPMYLS. Residues 31–148 enclose the Ig-like C2-type domain; the sequence is LEVSVGKATT…KDLNNSATIF (118 aa). Residues 31–161 lie on the Extracellular side of the membrane; the sequence is LEVSVGKATT…VDKLEKVDNT (131 aa). N-linked (GlcNAc...) asparagine glycans are attached at residues Asn-45, Asn-71, Asn-113, and Asn-142. Cys-53 and Cys-131 are oxidised to a cystine. Residues 162-182 traverse the membrane as a helical segment; that stretch reads VTLIILAVVGGVIGLLVCILL. Topologically, residues 183 to 228 are cytoplasmic; sequence LKKLITFILKKTREKKKECLVSSSGNDNTENGLPGSKAEEKPPTKV. The disordered stretch occupies residues 199-228; the sequence is KECLVSSSGNDNTENGLPGSKAEEKPPTKV. Residues 203-213 show a composition bias toward polar residues; the sequence is VSSSGNDNTEN. The segment covering 219 to 228 has biased composition (basic and acidic residues); that stretch reads KAEEKPPTKV.

The protein belongs to the sodium channel auxiliary subunit SCN4B (TC 8.A.17) family. In terms of assembly, a voltage-gated sodium (Nav) channel consists of an ion-conducting pore-forming alpha subunit functional on its own that is regulated by one or more beta subunits. The beta subunit SCN4B is disulfide-linked to the pore-forming alpha subunit. Interacts with SCN1A; regulatory subunit of SCN1A/Nav1.1. Interacts with SCN2A; regulatory subunit of SCN2A/Nav1.2. In terms of processing, contains an interchain disulfide bond with SCN2A.

The protein localises to the cell membrane. Its function is as follows. Regulatory subunit of multiple voltage-gated sodium (Nav) channels directly mediating the depolarization of excitable membranes. Navs, also called VGSCs (voltage-gated sodium channels) or VDSCs (voltage-dependent sodium channels), operate by switching between closed and open conformations depending on the voltage difference across the membrane. In the open conformation they allow Na(+) ions to selectively pass through the pore, along their electrochemical gradient. The influx of Na+ ions provokes membrane depolarization, initiating the propagation of electrical signals throughout cells and tissues. The accessory beta subunits participate in localization and functional modulation of the Nav channels. Modulates the activity of SCN1A/Nav1.1. Modulates the activity of SCN2A/Nav1.2. The protein is Sodium channel regulatory subunit beta-4 of Mus musculus (Mouse).